Reading from the N-terminus, the 79-residue chain is ATP synthase subunit c (79 aa).

2 helical membrane-spanning segments follow: residues 11 to 31 and 53 to 73; these read MAAAIMMGLAAIGAAIGIGIL and FFIVMGLVDAIPMIAVGLGLY.

It belongs to the ATPase C chain family. F-type ATPases have 2 components, F(1) - the catalytic core - and F(0) - the membrane proton channel. F(1) has five subunits: alpha(3), beta(3), gamma(1), delta(1), epsilon(1). F(0) has three main subunits: a(1), b(2) and c(10-14). The alpha and beta chains form an alternating ring which encloses part of the gamma chain. F(1) is attached to F(0) by a central stalk formed by the gamma and epsilon chains, while a peripheral stalk is formed by the delta and b chains.

Its subcellular location is the cell inner membrane. In terms of biological role, f(1)F(0) ATP synthase produces ATP from ADP in the presence of a proton or sodium gradient. F-type ATPases consist of two structural domains, F(1) containing the extramembraneous catalytic core and F(0) containing the membrane proton channel, linked together by a central stalk and a peripheral stalk. During catalysis, ATP synthesis in the catalytic domain of F(1) is coupled via a rotary mechanism of the central stalk subunits to proton translocation. Its function is as follows. Key component of the F(0) channel; it plays a direct role in translocation across the membrane. A homomeric c-ring of between 10-14 subunits forms the central stalk rotor element with the F(1) delta and epsilon subunits. The sequence is that of ATP synthase subunit c from Proteus mirabilis (strain HI4320).